A 238-amino-acid polypeptide reads, in one-letter code: Sarcospan (238 aa).

The disordered stretch occupies residues 1–33 (MGKDRQPRGQQRQGDAAGPDDPGPKKGAGTREQ). The Extracellular portion of the chain corresponds to 1 to 48 (MGKDRQPRGQQRQGDAAGPDDPGPKKGAGTREQRGEEEAQTCCGCRFP). Positions 8 to 20 (RGQQRQGDAAGPD) are enriched in low complexity. The helical transmembrane segment at 49-69 (LLLALLQLALGVAVTVVGFLM) threads the bilayer. Residues 70 to 81 (ASVSSSLLVRAT) are Cytoplasmic-facing. A helical transmembrane segment spans residues 82-102 (PYWAGIIVCVVAYLGLFMLCV). Residues 103–117 (SYQVDERTCIQFSMK) lie on the Cytoplasmic side of the membrane. The chain crosses the membrane as a helical span at residues 118-138 (LLYFVLSALGLVVCVLAVAFA). Over 139-188 (AHHYSLLTHLTCENAPDSCQCKLPSSEPLSRTFVYRDVTDCTSITGTFQV) the chain is Extracellular. Residues 189-209 (FLLVQMVLNLVCGLVCLVACF) form a helical membrane-spanning segment. Residues 210–238 (VMWKHRYQVFYVGVRMCPLSASEGQQQKV) lie on the Cytoplasmic side of the membrane.

It localises to the cell membrane. Its subcellular location is the sarcolemma. The protein localises to the postsynaptic cell membrane. Functionally, component of the dystrophin-glycoprotein complex (DGC), a complex that spans the muscle plasma membrane and forms a link between the F-actin cytoskeleton and the extracellular matrix. Preferentially associates with the sarcoglycan subcomplex of the DGC. The polypeptide is Sarcospan (SSPN) (Oryctolagus cuniculus (Rabbit)).